Reading from the N-terminus, the 199-residue chain is Recombination protein RecR (199 aa).

The C4-type zinc finger occupies 57–72 (CAECRTFTEEEVCHIC). The region spanning 81-176 (GQICVVESPA…EASRIAHGVP (96 aa)) is the Toprim domain.

The protein belongs to the RecR family.

Functionally, may play a role in DNA repair. It seems to be involved in an RecBC-independent recombinational process of DNA repair. It may act with RecF and RecO. The chain is Recombination protein RecR from Vibrio parahaemolyticus serotype O3:K6 (strain RIMD 2210633).